A 216-amino-acid chain; its full sequence is GTP-binding nuclear protein spi1 (216 aa).

The region spanning 6-170 is the Small GTPase Ran-type domain; it reads NVPTFKLVLV…LWLARKLVGN (165 aa). 17–24 contributes to the GTP binding site; it reads DGGTGKTT. Thr20 carries the phosphothreonine modification. The switch-I stretch occupies residues 36-44; sequence KKYIATLGV. Residues Gly67, 121–124, and 149–151 each bind GTP; these read NKVD and SAK. Residues 67-83 form a switch-II region; sequence GQEKLGGLRDGYYIQGQ.

Belongs to the small GTPase superfamily. Ran family. Oligomer of dis3, pim1 and spi1. Found in a nuclear export complex with RanGTP, exportin and pre-miRNA. Interacts with fft3.

The protein resides in the nucleus. GTP-binding protein involved in nucleocytoplasmic transport. Required for the import of protein into the nucleus and also for RNA export. The chain is GTP-binding nuclear protein spi1 (spi1) from Schizosaccharomyces pombe (strain 972 / ATCC 24843) (Fission yeast).